A 219-amino-acid chain; its full sequence is Large ribosomal subunit protein uL4 (219 aa).

Residues 45 to 103 (ARRQGTHATKTRGQVRGGGRKPYRQKGTGRARQGSIRAPQFTGGGTVHGPQPRDYDQRT) form a disordered region. Residues 62-73 (GGRKPYRQKGTG) show a composition bias toward basic residues.

The protein belongs to the universal ribosomal protein uL4 family. In terms of assembly, part of the 50S ribosomal subunit.

Its function is as follows. One of the primary rRNA binding proteins, this protein initially binds near the 5'-end of the 23S rRNA. It is important during the early stages of 50S assembly. It makes multiple contacts with different domains of the 23S rRNA in the assembled 50S subunit and ribosome. Forms part of the polypeptide exit tunnel. The protein is Large ribosomal subunit protein uL4 of Corynebacterium kroppenstedtii (strain DSM 44385 / JCM 11950 / CIP 105744 / CCUG 35717).